Here is a 321-residue protein sequence, read N- to C-terminus: Hex-5-enoyl-[acyl-carrier protein] acetylenase (321 aa).

Transmembrane regions (helical) follow at residues 36–56 (FLLYNVIPTIGTITAIALLWW) and 62–82 (VEIGLLIGMWALSMIGMSVGL). A Histidine box-1 motif is present at residues 83-88 (HRYFAH). The chain crosses the membrane as a helical span at residues 99 to 119 (VILAILGCMGAQGPVVSWVAV). The Histidine box-2 motif lies at 120–124 (HRRHH). A helical membrane pass occupies residues 188–208 (YVVWIVLGLLIPTILGGIIHG). The Histidine box-3 motif lies at 269 to 273 (QNNHH).

Belongs to the fatty acid desaturase type 2 family. Requires Fe(2+) as cofactor.

It localises to the membrane. The enzyme catalyses 5-hexenoyl-[ACP] + 2 reduced [2Fe-2S]-[ferredoxin] + O2 + 2 H(+) = 5-hexynoyl-[ACP] + 2 oxidized [2Fe-2S]-[ferredoxin] + 2 H2O. The catalysed reaction is hexanoyl-[ACP] + 2 reduced [2Fe-2S]-[ferredoxin] + O2 + 2 H(+) = 5-hexenoyl-[ACP] + 2 oxidized [2Fe-2S]-[ferredoxin] + 2 H2O. In terms of biological role, desaturase involved in the biosynthesis of jamaicamides, which show sodium channel blocking activity and fish toxicity. Catalyzes the conversion of 5-hexenoyl loaded onto the acyl carrier protein JamC (5-hexenoyl-JamC) to 5-hexynoyl-JamC. Can also catalyze the conversion of hexanoyl-JamC to 5-hexenoyl-JamC, but it cannot use free 5-hexenoic acid, 5-hexenoyl-CoA, 2-hexenoyl-JamC, 3-hexenoyl-JamC or 4-hexenoyl-JamC. Is specific for C(6) chains, and cannot use 4-pentenoyl-JamC, 6-heptenoyl-JamC or 7-octenoyl-JamC as substrate. The chain is Hex-5-enoyl-[acyl-carrier protein] acetylenase from Moorena producens (strain JHB).